The chain runs to 707 residues: Translation initiation factor IF-2 (707 aa).

Residues 55 to 80 (LAEKPKEEKQKDQKNHEQEAQDKEEK) show a composition bias toward basic and acidic residues. Positions 55-88 (LAEKPKEEKQKDQKNHEQEAQDKEEKEIEEDSFY) are disordered. The tr-type G domain maps to 209-378 (PRPPIVTVMG…LLVAEMEDLK (170 aa)). A G1 region spans residues 218–225 (GHVDHGKT). Residue 218–225 (GHVDHGKT) coordinates GTP. Residues 243-247 (GITQH) are G2. The G3 stretch occupies residues 264–267 (DTPG). GTP is bound by residues 264-268 (DTPGH) and 318-321 (NKID). A G4 region spans residues 318 to 321 (NKID). The interval 354–356 (SAK) is G5.

Belongs to the TRAFAC class translation factor GTPase superfamily. Classic translation factor GTPase family. IF-2 subfamily.

Its subcellular location is the cytoplasm. Its function is as follows. One of the essential components for the initiation of protein synthesis. Protects formylmethionyl-tRNA from spontaneous hydrolysis and promotes its binding to the 30S ribosomal subunits. Also involved in the hydrolysis of GTP during the formation of the 70S ribosomal complex. The chain is Translation initiation factor IF-2 from Caldanaerobacter subterraneus subsp. tengcongensis (strain DSM 15242 / JCM 11007 / NBRC 100824 / MB4) (Thermoanaerobacter tengcongensis).